Consider the following 311-residue polypeptide: Ornithine carbamoyltransferase (311 aa).

Carbamoyl phosphate-binding positions include 57 to 60 (STRT), Gln-84, Arg-108, and 135 to 138 (HPCQ). L-ornithine contacts are provided by residues Asn-166, Asp-230, and 234–235 (SM). Carbamoyl phosphate contacts are provided by residues 270–271 (CL) and Arg-298.

This sequence belongs to the aspartate/ornithine carbamoyltransferase superfamily. OTCase family.

It is found in the cytoplasm. It catalyses the reaction carbamoyl phosphate + L-ornithine = L-citrulline + phosphate + H(+). The protein operates within amino-acid biosynthesis; L-arginine biosynthesis; L-arginine from L-ornithine and carbamoyl phosphate: step 1/3. Functionally, reversibly catalyzes the transfer of the carbamoyl group from carbamoyl phosphate (CP) to the N(epsilon) atom of ornithine (ORN) to produce L-citrulline. The polypeptide is Ornithine carbamoyltransferase (Carboxydothermus hydrogenoformans (strain ATCC BAA-161 / DSM 6008 / Z-2901)).